Consider the following 699-residue polypeptide: D-(-)-3-hydroxybutyrate oligomer hydrolase (699 aa).

The first 33 residues, 1 to 33, serve as a signal peptide directing secretion; that stretch reads MTAIRGGSRRAPGLALALLGGVLLGACHGDENA. The Charge relay system role is filled by Ser-311.

This sequence belongs to the D-(-)-3-hydroxybutyrate oligomer hydrolase family.

It localises to the secreted. The enzyme catalyses (3R)-hydroxybutanoate dimer + H2O = 2 (R)-3-hydroxybutanoate + H(+). It participates in lipid metabolism; butanoate metabolism. Functionally, participates in the degradation of poly-3-hydroxybutyrate (PHB). It works downstream of poly(3-hydroxybutyrate) depolymerase, hydrolyzing D(-)-3-hydroxybutyrate oligomers of various length (3HB-oligomers) into 3HB-monomers. The chain is D-(-)-3-hydroxybutyrate oligomer hydrolase from Burkholderia pseudomallei (strain 1106a).